We begin with the raw amino-acid sequence, 136 residues long: Small ribosomal subunit protein eS12 (136 aa).

The protein belongs to the eukaryotic ribosomal protein eS12 family.

This is Small ribosomal subunit protein eS12 (rps12) from Dictyostelium discoideum (Social amoeba).